The sequence spans 210 residues: 3-demethoxyubiquinol 3-hydroxylase (210 aa).

Glu59, Glu89, His92, Glu141, Glu173, and His176 together coordinate Fe cation.

This sequence belongs to the COQ7 family. Requires Fe cation as cofactor.

The protein resides in the cell membrane. It catalyses the reaction a 5-methoxy-2-methyl-3-(all-trans-polyprenyl)benzene-1,4-diol + AH2 + O2 = a 3-demethylubiquinol + A + H2O. It functions in the pathway cofactor biosynthesis; ubiquinone biosynthesis. In terms of biological role, catalyzes the hydroxylation of 2-nonaprenyl-3-methyl-6-methoxy-1,4-benzoquinol during ubiquinone biosynthesis. This is 3-demethoxyubiquinol 3-hydroxylase from Albidiferax ferrireducens (strain ATCC BAA-621 / DSM 15236 / T118) (Rhodoferax ferrireducens).